A 232-amino-acid chain; its full sequence is Clarin-1 (232 aa).

A helical transmembrane segment spans residues 8–28; sequence IIFCMAGVLSFLCALGVVTAV. A glycan (N-linked (GlcNAc...) asparagine) is linked at asparagine 48. 2 helical membrane-spanning segments follow: residues 101-121 and 135-155; these read IILFSMILVVLTMVGTAFFMY and LGLYLVSFISGSCGCLVMILF. Residue asparagine 184 is glycosylated (N-linked (GlcNAc...) asparagine). A helical membrane pass occupies residues 186-206; sequence TTSFWVVFICFFVHFLNGLLI.

This sequence belongs to the clarin family.

Its subcellular location is the cell membrane. Functionally, may have a role in the excitatory ribbon synapse junctions between hair cells and cochlear ganglion cells and presumably also in analogous synapses within the retina. This is Clarin-1 (Clrn1) from Mus musculus (Mouse).